Reading from the N-terminus, the 326-residue chain is 4-hydroxythreonine-4-phosphate dehydrogenase (326 aa).

Residue Thr132 participates in substrate binding. Positions 160, 205, and 260 each coordinate a divalent metal cation. Positions 268, 277, and 286 each coordinate substrate.

The protein belongs to the PdxA family. In terms of assembly, homodimer. Zn(2+) is required as a cofactor. The cofactor is Mg(2+). Co(2+) serves as cofactor.

It is found in the cytoplasm. It catalyses the reaction 4-(phosphooxy)-L-threonine + NAD(+) = 3-amino-2-oxopropyl phosphate + CO2 + NADH. The protein operates within cofactor biosynthesis; pyridoxine 5'-phosphate biosynthesis; pyridoxine 5'-phosphate from D-erythrose 4-phosphate: step 4/5. Its function is as follows. Catalyzes the NAD(P)-dependent oxidation of 4-(phosphooxy)-L-threonine (HTP) into 2-amino-3-oxo-4-(phosphooxy)butyric acid which spontaneously decarboxylates to form 3-amino-2-oxopropyl phosphate (AHAP). The sequence is that of 4-hydroxythreonine-4-phosphate dehydrogenase from Stenotrophomonas maltophilia (strain R551-3).